The primary structure comprises 207 residues: Outer-membrane lipoprotein LolB (207 aa).

Positions Met1 to Ser26 are cleaved as a signal peptide. Cys27 is lipidated: N-palmitoyl cysteine. The S-diacylglycerol cysteine moiety is linked to residue Cys27.

It belongs to the LolB family. In terms of assembly, monomer.

The protein localises to the cell outer membrane. In terms of biological role, plays a critical role in the incorporation of lipoproteins in the outer membrane after they are released by the LolA protein. The chain is Outer-membrane lipoprotein LolB from Francisella tularensis subsp. tularensis (strain FSC 198).